The sequence spans 230 residues: 5'-methylthioadenosine/S-adenosylhomocysteine nucleosidase (230 aa).

E12 (proton acceptor) is an active-site residue. Residues G78, I153, and 174–175 (ME) contribute to the substrate site. D198 serves as the catalytic Proton donor.

Belongs to the PNP/UDP phosphorylase family. MtnN subfamily.

It carries out the reaction S-adenosyl-L-homocysteine + H2O = S-(5-deoxy-D-ribos-5-yl)-L-homocysteine + adenine. The enzyme catalyses S-methyl-5'-thioadenosine + H2O = 5-(methylsulfanyl)-D-ribose + adenine. The catalysed reaction is 5'-deoxyadenosine + H2O = 5-deoxy-D-ribose + adenine. Its pathway is amino-acid biosynthesis; L-methionine biosynthesis via salvage pathway; S-methyl-5-thio-alpha-D-ribose 1-phosphate from S-methyl-5'-thioadenosine (hydrolase route): step 1/2. Functionally, catalyzes the irreversible cleavage of the glycosidic bond in both 5'-methylthioadenosine (MTA) and S-adenosylhomocysteine (SAH/AdoHcy) to adenine and the corresponding thioribose, 5'-methylthioribose and S-ribosylhomocysteine, respectively. Also cleaves 5'-deoxyadenosine, a toxic by-product of radical S-adenosylmethionine (SAM) enzymes, into 5-deoxyribose and adenine. This chain is 5'-methylthioadenosine/S-adenosylhomocysteine nucleosidase, found in Shewanella loihica (strain ATCC BAA-1088 / PV-4).